Consider the following 89-residue polypeptide: UPF0147 protein Saci_0891 (89 aa).

It belongs to the UPF0147 family.

This chain is UPF0147 protein Saci_0891, found in Sulfolobus acidocaldarius (strain ATCC 33909 / DSM 639 / JCM 8929 / NBRC 15157 / NCIMB 11770).